Here is a 429-residue protein sequence, read N- to C-terminus: Cyclin-B2-1 (429 aa).

The protein belongs to the cyclin family. Cyclin AB subfamily. In terms of assembly, interacts with CDC20-1 and CDC20-2. In terms of tissue distribution, expressed in roots, stems, leaves, flowers and siliques.

The sequence is that of Cyclin-B2-1 (CYCB2-1) from Arabidopsis thaliana (Mouse-ear cress).